A 355-amino-acid chain; its full sequence is tRNA-specific 2-thiouridylase MnmA (355 aa).

ATP contacts are provided by residues 6 to 13 and methionine 32; that span reads AMSGGVDS. Cysteine 93 acts as the Nucleophile in catalysis. A disulfide bond links cysteine 93 and cysteine 191. Residue glycine 117 participates in ATP binding. Residues 140–142 are interaction with tRNA; the sequence is KDQ. Catalysis depends on cysteine 191, which acts as the Cysteine persulfide intermediate. Residues 296–297 are interaction with tRNA; it reads RY.

Belongs to the MnmA/TRMU family.

Its subcellular location is the cytoplasm. It catalyses the reaction S-sulfanyl-L-cysteinyl-[protein] + uridine(34) in tRNA + AH2 + ATP = 2-thiouridine(34) in tRNA + L-cysteinyl-[protein] + A + AMP + diphosphate + H(+). Functionally, catalyzes the 2-thiolation of uridine at the wobble position (U34) of tRNA, leading to the formation of s(2)U34. The protein is tRNA-specific 2-thiouridylase MnmA of Pelobacter propionicus (strain DSM 2379 / NBRC 103807 / OttBd1).